The sequence spans 606 residues: CDPK-related kinase 8 (606 aa).

Over residues 1 to 14 (MGGCTSKPSTSSGR) the composition is skewed to polar residues. A disordered region spans residues 1–132 (MGGCTSKPST…TEVPQREEEE (132 aa)). G2 carries the N-myristoyl glycine lipid modification. Basic residues predominate over residues 98 to 110 (KHIRAALRRRKGK). The Protein kinase domain occupies 150–412 (VELGEEIGRG…ASQALMHPWI (263 aa)). Residues 156 to 164 (IGRGHFGYT) and K182 contribute to the ATP site. D278 (proton acceptor) is an active-site residue. Phosphoserine is present on S318. The autoinhibitory domain stretch occupies residues 418 to 448 (DMNIPFDILIFRQMKAYLRSSSLRKAALRAL). Residues 437-457 (SSSLRKAALRALSKTLIKDEI) are calmodulin binding (CaMBD). EF-hand domains follow at residues 455–491 (DEILYLKTQFSLLAPNKDGLITMDTIRMALASNATEA), 492–527 (MKESRIPEFLALLNGLQYRGMDFEEFCAAAINVHQH), 528–567 (ESLDCWEQSIRHAYELFDKNGNRAIVIEELASELGVGPSI), and 570–599 (HSVLHDWIRHTDGKLSFFGFVKLLHGVSVR). The Ca(2+) site is built by N470, D472, E516, D545, N547, N549, E556, D581, and K583. The residue at position 585 (S585) is a Phosphoserine.

It belongs to the protein kinase superfamily. Ser/Thr protein kinase family. CDPK subfamily. In terms of assembly, binds calmodulin (CaM) in a calcium-dependent manner. Post-translationally, autophosphorylated.

Its subcellular location is the membrane. The enzyme catalyses L-seryl-[protein] + ATP = O-phospho-L-seryl-[protein] + ADP + H(+). It carries out the reaction L-threonyl-[protein] + ATP = O-phospho-L-threonyl-[protein] + ADP + H(+). Activated by calcium and calmodulin. Autophosphorylation may play an important role in the regulation of the kinase activity. Its function is as follows. May play a role in signal transduction pathways that involve calcium as a second messenger. The sequence is that of CDPK-related kinase 8 (CRK8) from Arabidopsis thaliana (Mouse-ear cress).